The chain runs to 285 residues: Inositol monophosphatase 1 (285 aa).

The Mg(2+) site is built by Glu-73, Asp-93, Ile-95, and Asp-96. Glu-73 is a substrate binding site. Substrate-binding positions include Ile-95–Thr-98, Gly-198–Ala-200, Glu-217, and Asp-224. Asp-224 is a binding site for Mg(2+).

It belongs to the inositol monophosphatase superfamily. Homodimer. Requires Mg(2+) as cofactor.

Its subcellular location is the cytoplasm. It catalyses the reaction a myo-inositol phosphate + H2O = myo-inositol + phosphate. It carries out the reaction 1D-myo-inositol 1-phosphate + H2O = myo-inositol + phosphate. The catalysed reaction is 1D-myo-inositol 2-phosphate + H2O = myo-inositol + phosphate. The enzyme catalyses 1D-myo-inositol 3-phosphate + H2O = myo-inositol + phosphate. It catalyses the reaction 1D-myo-inositol 4-phosphate + H2O = myo-inositol + phosphate. It carries out the reaction 1D-myo-inositol 5-phosphate + H2O = myo-inositol + phosphate. The catalysed reaction is 1D-myo-inositol 6-phosphate + H2O = myo-inositol + phosphate. The enzyme catalyses scyllo-inositol 1-phosphate + H2O = scyllo-inositol + phosphate. It catalyses the reaction alpha-D-galactose 1-phosphate + H2O = D-galactose + phosphate. It carries out the reaction alpha-D-glucose 1-phosphate + H2O = D-glucose + phosphate. The catalysed reaction is D-glucose 6-phosphate + H2O = D-glucose + phosphate. The enzyme catalyses beta-D-fructose 1-phosphate + H2O = D-fructose + phosphate. It catalyses the reaction glycerol 2-phosphate + H2O = glycerol + phosphate. It carries out the reaction adenosine 2'-phosphate + H2O = adenosine + phosphate. Its pathway is polyol metabolism; myo-inositol biosynthesis; myo-inositol from D-glucose 6-phosphate: step 2/2. Its activity is regulated as follows. Inhibited by Li(+), Ca(2+) and Mn(2+), but also by Mg(2+) at concentrations above 3 mM. Its function is as follows. Phosphatase involved in the dephosphorylation of myo-inositol monophosphate to generate myo-inositol. Is also able to dephosphorylate scyllo-inositol-phosphate, myo-inositol 1,4-diphosphate, scyllo-inositol-1,3-diphosphate and scyllo-inositol-1,4-diphosphate. Also dephosphorylates in vitro other sugar-phosphates including D-galactose-1-phosphate, glucose-1-phosphate, glucose-6-phosphate, fructose-1-phosphate, beta-glycerophosphate and 2'-AMP. Responsible for the provision of inositol required for synthesis of phosphatidylinositol and polyphosphoinositides, and involved in maintaining normal brain function. Has been implicated as the pharmacological target for lithium Li(+) action in brain. In Xenopus laevis (African clawed frog), this protein is Inositol monophosphatase 1 (impa1).